The sequence spans 857 residues: Phosphoenolpyruvate carboxylase (857 aa).

Residues H144 and K530 contribute to the active site.

It belongs to the PEPCase type 1 family. Homotetramer. Mg(2+) serves as cofactor. In terms of processing, the N-terminus is blocked.

The enzyme catalyses oxaloacetate + phosphate = phosphoenolpyruvate + hydrogencarbonate. Forms oxaloacetate, a four-carbon dicarboxylic acid source for the tricarboxylic acid cycle. This chain is Phosphoenolpyruvate carboxylase (ppc), found in Thermus sp. (strain 71).